A 210-amino-acid chain; its full sequence is ATP-dependent Clp protease proteolytic subunit (210 aa).

Residue S113 is the Nucleophile of the active site. Residue H138 is part of the active site.

Belongs to the peptidase S14 family. Fourteen ClpP subunits assemble into 2 heptameric rings which stack back to back to give a disk-like structure with a central cavity, resembling the structure of eukaryotic proteasomes.

It is found in the cytoplasm. The enzyme catalyses Hydrolysis of proteins to small peptides in the presence of ATP and magnesium. alpha-casein is the usual test substrate. In the absence of ATP, only oligopeptides shorter than five residues are hydrolyzed (such as succinyl-Leu-Tyr-|-NHMec, and Leu-Tyr-Leu-|-Tyr-Trp, in which cleavage of the -Tyr-|-Leu- and -Tyr-|-Trp bonds also occurs).. Cleaves peptides in various proteins in a process that requires ATP hydrolysis. Has a chymotrypsin-like activity. Plays a major role in the degradation of misfolded proteins. The polypeptide is ATP-dependent Clp protease proteolytic subunit (Marinomonas sp. (strain MWYL1)).